Consider the following 495-residue polypeptide: Hydroxyneurosporene desaturase (495 aa).

Belongs to the carotenoid/retinoid oxidoreductase family.

The catalysed reaction is rhodopin + A = (3E)-3,4-didehydrorhodopin + AH2. Its pathway is carotenoid biosynthesis; spheroidene biosynthesis. Functionally, catalyzes the introduction of C-3,4 double bonds into 1-hydroxyneurosporene (1-HO-Neu) to yield demethylspheroidene (DMS). It prefer the acyclic carotenoids such as 1-hydroxylycopene, and 1-hydroxy-gamma-carotene, whereas 1-hydroxy-3,4-didehydrolycopene and 1,1-dihydroxylycopene are much less effective. This Cereibacter sphaeroides (strain ATCC 17023 / DSM 158 / JCM 6121 / CCUG 31486 / LMG 2827 / NBRC 12203 / NCIMB 8253 / ATH 2.4.1.) (Rhodobacter sphaeroides) protein is Hydroxyneurosporene desaturase (crtD).